The primary structure comprises 272 residues: Iodotyrosine deiodinase (272 aa).

A helical membrane pass occupies residues 5 to 25; the sequence is LSGVSYGLLAGILAMLIHLVY. FMN contacts are provided by residues 82–86, serine 110, and 110–111; these read RRSVR and SG. 4 residues coordinate 3-iodo-L-tyrosine: alanine 112, glutamate 139, tyrosine 143, and lysine 164. FMN is bound by residues 219–221 and arginine 261; that span reads TST.

The protein belongs to the nitroreductase family. The cofactor is FMN.

Its subcellular location is the membrane. It catalyses the reaction 2 iodide + L-tyrosine + 2 NADP(+) = 3,5-diiodo-L-tyrosine + 2 NADPH + H(+). The enzyme catalyses iodide + L-tyrosine + NADP(+) = 3-iodo-L-tyrosine + NADPH. The catalysed reaction is 3-iodo-L-tyrosine + iodide + NADP(+) = 3,5-diiodo-L-tyrosine + NADPH + H(+). It carries out the reaction L-tyrosine + chloride + NADP(+) = 3-chloro-L-tyrosine + NADPH. It catalyses the reaction bromide + L-tyrosine + NADP(+) = 3-bromo-L-tyrosine + NADPH. Its function is as follows. Catalyzes the dehalogenation of halotyrosines such as 3,5-diiodo-L-tyrosine. Likely to also catalyze the dehalogenation of other halotyrosines such as 3-bromo-L-tyrosine, 3-chloro-L-tyrosine and 3-iodo-L-tyrosine. This chain is Iodotyrosine deiodinase, found in Hydra vulgaris (Hydra).